We begin with the raw amino-acid sequence, 121 residues long: Small ribosomal subunit protein bS6 (121 aa).

This sequence belongs to the bacterial ribosomal protein bS6 family.

Functionally, binds together with bS18 to 16S ribosomal RNA. This Rickettsia prowazekii (strain Madrid E) protein is Small ribosomal subunit protein bS6 (rpsF).